The following is a 473-amino-acid chain: FAD-dependent monooxygenase ctvC (473 aa).

Positions 37, 51, and 110 each coordinate FAD. Residues 218-238 (IGPGFTFLIFPAAGDSLFWVL) traverse the membrane as a helical segment. Positions 310 and 323 each coordinate FAD. Asn-358 carries N-linked (GlcNAc...) asparagine glycosylation. The helical transmembrane segment at 451–471 (LVYCFGVVILLWISWAVFNVN) threads the bilayer.

Belongs to the paxM FAD-dependent monooxygenase family. FAD is required as a cofactor.

Its subcellular location is the membrane. It participates in mycotoxin biosynthesis. Functionally, FAD-dependent monooxygenase; part of the gene cluster that mediates the biosynthesis of citreoviridin, an inhibitor of the of F1-ATPase beta-subunit. The HR-PKS ctvA accepts acetyl-CoA as the starter unit and catalyzes eight iterations of malonyl-CoA extension and four iterations of SAM-dependent methylation at C4, C12, C14, and C16. The KR and DH domains selectively act on the first six iterations to generate the hexaene chain. In the last three iterations, the KR and DH domains terminate their functions to yield a beta,delta-diketo ester moiety, which then undergoes intramolecular cyclization to yield an alpha-pyrone intermediate. Subsequently, ctvB methylates the alpha-pyrone hydroxyl group to generate citreomontanin. In order to form the tetrahydrofuran ring with the correct stereochemistry, the terminal alkenes of citreomontanin need to undergo isomerization to yield a (17Z)-hexaene, a step that could be catalyzed by ctvC. The (17Z)-hexaene then undergoes bisepoxidation by ctvC to form a (17R,16R,15S,14R)-bisepoxide moiety. Lastly, ctvD acts as a regioselective hydrolase to form the tetrahydrofuran ring with the substituents in the correct absolute configuration, completing the biosynthesis of citreoviridin. In Aspergillus terreus (strain NIH 2624 / FGSC A1156), this protein is FAD-dependent monooxygenase ctvC.